We begin with the raw amino-acid sequence, 419 residues long: Subtilisin-like protease 2 (419 aa).

The first 16 residues, M1–G16, serve as a signal peptide directing secretion. Residues D17–A122 constitute a propeptide that is removed on maturation. The Inhibitor I9 domain maps to Q36 to A122. The region spanning R131 to K419 is the Peptidase S8 domain. Active-site charge relay system residues include D169 and H201. 3 N-linked (GlcNAc...) asparagine glycosylation sites follow: N248, N261, and N348. The active-site Charge relay system is S357. The N-linked (GlcNAc...) asparagine glycan is linked to N388.

The protein belongs to the peptidase S8 family.

The protein resides in the secreted. Functionally, secreted subtilisin-like serine protease with keratinolytic activity that contributes to pathogenicity. This is Subtilisin-like protease 2 (SUB2) from Arthroderma benhamiae (Trichophyton mentagrophytes).